The sequence spans 167 residues: Small ribosomal subunit protein uS5 (167 aa).

Residues 12–75 (LEDNVVAINR…EAARKNLIEV (64 aa)) form the S5 DRBM domain.

It belongs to the universal ribosomal protein uS5 family. As to quaternary structure, part of the 30S ribosomal subunit. Contacts proteins S4 and S8.

With S4 and S12 plays an important role in translational accuracy. Functionally, located at the back of the 30S subunit body where it stabilizes the conformation of the head with respect to the body. This Levilactobacillus brevis (strain ATCC 367 / BCRC 12310 / CIP 105137 / JCM 1170 / LMG 11437 / NCIMB 947 / NCTC 947) (Lactobacillus brevis) protein is Small ribosomal subunit protein uS5.